A 290-amino-acid chain; its full sequence is Translin-associated protein X (290 aa).

A disordered region spans residues 1–32 (MSNKEGSGGFRKRKHDNFPHNQRREGKDVNSS). Over residues 16 to 28 (DNFPHNQRREGKD) the composition is skewed to basic and acidic residues. Residues 73–208 (LLHRITSAPD…MRMCINSVGN (136 aa)) form an interaction with C1D region. Residues glutamate 129 and glutamate 197 each coordinate Mg(2+). Residue lysine 279 forms a Glycyl lysine isopeptide (Lys-Gly) (interchain with G-Cter in SUMO2) linkage.

It belongs to the translin family. As to quaternary structure, ring-shaped heterooctamer of six TSN and two TSNAX subunits. Interacts with GOLGA3, TSNAXIP1, SUN1 and AKAP9. Interacts with the homodimeric form of C1D following gamma-radiation. Interacts with TSN and C1D in a mutually exclusive manner. Post-translationally, sumoylated with SUMO1.

It is found in the cytoplasm. Its subcellular location is the perinuclear region. The protein localises to the golgi apparatus. It localises to the nucleus. Its function is as follows. Acts in combination with TSN as an endonuclease involved in the activation of the RNA-induced silencing complex (RISC). Possible role in spermatogenesis. This chain is Translin-associated protein X (TSNAX), found in Pongo abelii (Sumatran orangutan).